The primary structure comprises 108 residues: Small ribosomal subunit protein bS16 (108 aa).

A disordered region spans residues 82–108; that stretch reads ESKFSKNTQTENKKPVSKKTTKKSKDN. Over residues 96 to 108 the composition is skewed to basic residues; that stretch reads PVSKKTTKKSKDN.

It belongs to the bacterial ribosomal protein bS16 family.

The protein is Small ribosomal subunit protein bS16 of Mycoplasma capricolum subsp. capricolum (strain California kid / ATCC 27343 / NCTC 10154).